We begin with the raw amino-acid sequence, 343 residues long: UBP1-associated proteins 1A (343 aa).

Residues 1 to 61 (MAKTLDKSKK…SESDNEFDPE (61 aa)) form a disordered region. The segment covering 28–49 (NKQQQQPESSTPYSSSSSSSDS) has biased composition (low complexity). Positions 50-61 (SDSESDNEFDPE) are enriched in acidic residues. An RRM domain is found at 104 to 181 (RKIFVYGLPW…RTATCQLASM (78 aa)). Positions 312–343 (STYPDSDAGGKRGTGKDSDAGGSSFHGYSNYS) are disordered. Residues 319–330 (AGGKRGTGKDSD) are compositionally biased toward basic and acidic residues.

As to quaternary structure, interacts with UBA1A, UBA2A, UBP1A, UBP1B and UBP1C.

The protein resides in the nucleus. In terms of biological role, acts as a component of a complex regulating the turnover of mRNAs in the nucleus. Binds with high affinity to RNA molecules that contain U-rich sequences in 3'-UTRs. May function in complex with UBP1 and contribute to the stabilization of mRNAs in the nucleus. However, unlike UBP1, UBA1A does not stimulate pre-mRNA splicing. This chain is UBP1-associated proteins 1A (UBA1A), found in Arabidopsis thaliana (Mouse-ear cress).